Consider the following 173-residue polypeptide: NADH-quinone oxidoreductase subunit B (173 aa).

4 residues coordinate [4Fe-4S] cluster: cysteine 46, cysteine 47, cysteine 112, and cysteine 142.

The protein belongs to the complex I 20 kDa subunit family. NDH-1 is composed of 14 different subunits. Subunits NuoB, C, D, E, F, and G constitute the peripheral sector of the complex. It depends on [4Fe-4S] cluster as a cofactor.

Its subcellular location is the cell membrane. It carries out the reaction a quinone + NADH + 5 H(+)(in) = a quinol + NAD(+) + 4 H(+)(out). In terms of biological role, NDH-1 shuttles electrons from NADH, via FMN and iron-sulfur (Fe-S) centers, to quinones in the respiratory chain. The immediate electron acceptor for the enzyme in this species is believed to be a menaquinone. Couples the redox reaction to proton translocation (for every two electrons transferred, four hydrogen ions are translocated across the cytoplasmic membrane), and thus conserves the redox energy in a proton gradient. This Desulfitobacterium hafniense (strain DSM 10664 / DCB-2) protein is NADH-quinone oxidoreductase subunit B.